The sequence spans 290 residues: ATP synthase gamma chain (290 aa).

It belongs to the ATPase gamma chain family. F-type ATPases have 2 components, CF(1) - the catalytic core - and CF(0) - the membrane proton channel. CF(1) has five subunits: alpha(3), beta(3), gamma(1), delta(1), epsilon(1). CF(0) has three main subunits: a, b and c.

The protein resides in the cell inner membrane. Produces ATP from ADP in the presence of a proton gradient across the membrane. The gamma chain is believed to be important in regulating ATPase activity and the flow of protons through the CF(0) complex. The protein is ATP synthase gamma chain of Delftia acidovorans (strain DSM 14801 / SPH-1).